A 473-amino-acid polypeptide reads, in one-letter code: ATP synthase subunit beta (473 aa).

Residue 153–160 (GGAGVGKT) coordinates ATP.

This sequence belongs to the ATPase alpha/beta chains family. F-type ATPases have 2 components, CF(1) - the catalytic core - and CF(0) - the membrane proton channel. CF(1) has five subunits: alpha(3), beta(3), gamma(1), delta(1), epsilon(1). CF(0) has three main subunits: a(1), b(2) and c(9-12). The alpha and beta chains form an alternating ring which encloses part of the gamma chain. CF(1) is attached to CF(0) by a central stalk formed by the gamma and epsilon chains, while a peripheral stalk is formed by the delta and b chains.

The protein resides in the cell inner membrane. The catalysed reaction is ATP + H2O + 4 H(+)(in) = ADP + phosphate + 5 H(+)(out). Its function is as follows. Produces ATP from ADP in the presence of a proton gradient across the membrane. The catalytic sites are hosted primarily by the beta subunits. The polypeptide is ATP synthase subunit beta (Rickettsia bellii (strain OSU 85-389)).